The chain runs to 292 residues: G1/S-specific cyclin-D3 (292 aa).

The 126-residue stretch at 27–152 folds into the Cyclin N-terminal domain; sequence VLQSLLRLEE…LVLGKLKWDL (126 aa). The interval 254–292 is disordered; it reads SLREASQTSSSPAPKAPRGSSSQGPSQTSTPTDVTAIHL. Phosphoserine is present on residues Ser-264 and Ser-279. Residues 272 to 285 are compositionally biased toward low complexity; it reads GSSSQGPSQTSTPT. Thr-283 is modified (phosphothreonine).

The protein belongs to the cyclin family. Cyclin D subfamily. In terms of assembly, interacts with the CDK4 and CDK6 protein kinases to form a serine/threonine kinase holoenzyme complex. The cyclin subunit imparts substrate specificity to the complex. Interacts with ATF5. Interacts with EIF3K. Component of the ternary complex cyclin D/CDK4/CDKN1B required for nuclear translocation and modulation of CDK4-mediated kinase activity. Can form similar complexes with either CDKN1A or CDKN2A. Post-translationally, phosphorylation at Thr-283 by MAP kinases is required for ubiquitination and degradation by the DCX(AMBRA1) complex. In terms of processing, ubiquitinated by the DCX(AMBRA1) complex during the transition from G1 to S cell phase, leading to its degradation: ubiquitination is dependent on Thr-283 phosphorylation. The DCX(AMBRA1) complex represents the major regulator of CCND3 stability during the G1/S transition. Polyubiquitinated by the SCF(FBXL2) complex, leading to proteasomal degradation.

The protein resides in the nucleus. It is found in the cytoplasm. Its function is as follows. Regulatory component of the cyclin D3-CDK4 (DC) complex that phosphorylates and inhibits members of the retinoblastoma (RB) protein family including RB1 and regulates the cell-cycle during G(1)/S transition. Phosphorylation of RB1 allows dissociation of the transcription factor E2F from the RB/E2F complex and the subsequent transcription of E2F target genes which are responsible for the progression through the G(1) phase. Hypophosphorylates RB1 in early G(1) phase. Cyclin D-CDK4 complexes are major integrators of various mitogenenic and antimitogenic signals. Component of the ternary complex, cyclin D3/CDK4/CDKN1B, required for nuclear translocation and activity of the cyclin D-CDK4 complex. Shows transcriptional coactivator activity with ATF5 independently of CDK4. The protein is G1/S-specific cyclin-D3 of Homo sapiens (Human).